The following is a 405-amino-acid chain: Transcriptional regulatory protein DEP1 (405 aa).

Over residues 1-12 (MSQQTPQESEQT) the composition is skewed to low complexity. Disordered regions lie at residues 1–26 (MSQQ…SVLS) and 49–171 (AGTE…VMPS). Ser56 carries the post-translational modification Phosphoserine. Basic and acidic residues-rich tracts occupy residues 86–108 (SLKR…KVPG) and 116–139 (EEEK…ARDE). Ser120 carries the phosphoserine modification. The segment covering 140 to 157 (QGDEGDNEEENNEEDNEN) has biased composition (acidic residues). The residue at position 370 (Ser370) is a Phosphoserine.

Component of the RPD3C(L) complex composed of at least ASH1, CTI6, DEP1, PHO23, RPD3, RXT2, RXT3, SAP30, SDS3, SIN3, UME1 and UME6.

The protein resides in the cytoplasm. The protein localises to the nucleus. Component of the RPD3C(L) histone deacetylase complex (HDAC) responsible for the deacetylation of lysine residues on the N-terminal part of the core histones (H2A, H2B, H3 and H4). Histone deacetylation gives a tag for epigenetic repression and plays an important role in transcriptional regulation, cell cycle progression and developmental events. The chain is Transcriptional regulatory protein DEP1 (DEP1) from Saccharomyces cerevisiae (strain ATCC 204508 / S288c) (Baker's yeast).